The sequence spans 872 residues: Protein SEY1 (872 aa).

At 1 to 749 (MVANGHFAGV…KRSAIGGITQ (749 aa)) the chain is on the cytoplasmic side. One can recognise a GB1/RHD3-type G domain in the interval 49-307 (GFNYHLISVF…IPADGFAVYA (259 aa)). 59-66 (GSQSTGKS) is a GTP binding site. Positions 482 to 504 (SNYQQELSLYQKDLENIGGQLRR) form a coiled coil. The tract at residues 676-704 (LDKWIGHTPSSATPADEEDLTPIGGVDED) is disordered. The segment covering 690-704 (ADEEDLTPIGGVDED) has biased composition (acidic residues). A helical membrane pass occupies residues 750-770 (VPLYFYGLLLALGWNEIVAVL). The Lumenal portion of the chain corresponds to 771–773 (RNP). The chain crosses the membrane as a helical span at residues 774–794 (AYFLLLFVCAVTAYVTYQLNL). At 795-872 (WGPIIKMTEA…IDDADDDDDF (78 aa)) the chain is on the cytoplasmic side. The disordered stretch occupies residues 849–872 (NRKSAGGFQNNRSHIDDADDDDDF).

The protein belongs to the TRAFAC class dynamin-like GTPase superfamily. GB1/RHD3 GTPase family. RHD3 subfamily.

The protein localises to the endoplasmic reticulum membrane. Cooperates with the reticulon proteins and tubule-shaping DP1 family proteins to generate and maintain the structure of the tubular endoplasmic reticulum network. Has GTPase activity, which is required for its function in ER organization. The polypeptide is Protein SEY1 (Paracoccidioides brasiliensis (strain Pb18)).